The primary structure comprises 291 residues: N-acetylmannosamine kinase (291 aa).

Residues alanine 5–lysine 12 and glycine 132–cysteine 139 contribute to the ATP site. 4 residues coordinate Zn(2+): histidine 156, cysteine 166, cysteine 168, and cysteine 173.

Belongs to the ROK (NagC/XylR) family. NanK subfamily. Homodimer.

The enzyme catalyses an N-acyl-D-mannosamine + ATP = an N-acyl-D-mannosamine 6-phosphate + ADP + H(+). It functions in the pathway amino-sugar metabolism; N-acetylneuraminate degradation; D-fructose 6-phosphate from N-acetylneuraminate: step 2/5. Functionally, catalyzes the phosphorylation of N-acetylmannosamine (ManNAc) to ManNAc-6-P. In Salmonella typhi, this protein is N-acetylmannosamine kinase.